The following is a 137-amino-acid chain: Peptide methionine sulfoxide reductase MsrB (137 aa).

Residues 7–129 form the MsrB domain; the sequence is PTENIEKLTD…NSASLNFVDD (123 aa). Residues cysteine 46, cysteine 49, cysteine 95, and cysteine 98 each contribute to the Zn(2+) site. The active-site Nucleophile is the cysteine 118.

It belongs to the MsrB Met sulfoxide reductase family. The cofactor is Zn(2+).

The catalysed reaction is L-methionyl-[protein] + [thioredoxin]-disulfide + H2O = L-methionyl-(R)-S-oxide-[protein] + [thioredoxin]-dithiol. The chain is Peptide methionine sulfoxide reductase MsrB from Yersinia enterocolitica serotype O:8 / biotype 1B (strain NCTC 13174 / 8081).